Here is a 1167-residue protein sequence, read N- to C-terminus: Non-toxic nonhemagglutinin (1167 aa).

The tract at residues 1–381 (MDIIDNVDIT…PQQIINLIDN (381 aa)) is light chain nLC. Residues 382 to 804 (NNILLIKSYI…LFNSKIQLTI (423 aa)) form an N-heavy chain nHN region. Residues 805-1167 (KNEKPEYNLL…LNDIYSWTLI (363 aa)) form a C-heavy chain nHC region.

The protein belongs to the botulism non-toxic nonhemagglutinin family.

In terms of biological role, expression of the ptox operon (ntnh-orfX1-orfX2-orfX3-pmp1) in B.thuringiensis kills Anopheles but not Aedes mosquito 3rd instar larvae. The ntnh-pmp1 construct is about half as toxic. This chain is Non-toxic nonhemagglutinin, found in Paraclostridium bifermentans (Clostridium bifermentans).